A 513-amino-acid chain; its full sequence is Probable DNA primase large subunit (513 aa).

[4Fe-4S] cluster contacts are provided by cysteine 315, cysteine 398, cysteine 415, and cysteine 457.

This sequence belongs to the eukaryotic-type primase large subunit family. Heterodimer of a small subunit and a large subunit. [4Fe-4S] cluster serves as cofactor.

DNA primase is the polymerase that synthesizes small RNA primers for the Okazaki fragments made during discontinuous DNA replication. This is Probable DNA primase large subunit from Neurospora crassa (strain ATCC 24698 / 74-OR23-1A / CBS 708.71 / DSM 1257 / FGSC 987).